The following is a 314-amino-acid chain: MKIVLANPRGFCAGVDRAISIVERALELYEAPIYVRHEVVHNRFVVEGLKQRGAIFVEELHEVPDDNIVIFSAHGVSQAVRKEAKERALTVFDATCPLVTKVHMEVARASKKNIEVVLIGHAGHPEVEGTMGQYASDSAGMYLVETPDDVIKLNVKDPSNLHYVSQTTLSVDETADVIDELRRVFPEIQGPRKDDICYATQNRQDAVRDMASQVDVMIVVGSKNSSNSNRLRELSEKLGTTSYLIDCPEDLKEEWLTEQTKVGVTAGASAPEELVNQIIEQVKAFGGTAVEELTGREENMFFEVPKELQIKTVS.

Cysteine 12 contacts [4Fe-4S] cluster. Histidine 41 and histidine 74 together coordinate (2E)-4-hydroxy-3-methylbut-2-enyl diphosphate. Positions 41 and 74 each coordinate dimethylallyl diphosphate. Residues histidine 41 and histidine 74 each contribute to the isopentenyl diphosphate site. Cysteine 96 is a [4Fe-4S] cluster binding site. (2E)-4-hydroxy-3-methylbut-2-enyl diphosphate is bound at residue histidine 124. Histidine 124 contacts dimethylallyl diphosphate. Histidine 124 contributes to the isopentenyl diphosphate binding site. The active-site Proton donor is the glutamate 126. Threonine 167 is a binding site for (2E)-4-hydroxy-3-methylbut-2-enyl diphosphate. Residue cysteine 197 participates in [4Fe-4S] cluster binding. (2E)-4-hydroxy-3-methylbut-2-enyl diphosphate-binding residues include serine 225, serine 226, asparagine 227, and serine 269. Dimethylallyl diphosphate is bound by residues serine 225, serine 226, asparagine 227, and serine 269. The isopentenyl diphosphate site is built by serine 225, serine 226, asparagine 227, and serine 269.

This sequence belongs to the IspH family. It depends on [4Fe-4S] cluster as a cofactor.

The catalysed reaction is isopentenyl diphosphate + 2 oxidized [2Fe-2S]-[ferredoxin] + H2O = (2E)-4-hydroxy-3-methylbut-2-enyl diphosphate + 2 reduced [2Fe-2S]-[ferredoxin] + 2 H(+). It carries out the reaction dimethylallyl diphosphate + 2 oxidized [2Fe-2S]-[ferredoxin] + H2O = (2E)-4-hydroxy-3-methylbut-2-enyl diphosphate + 2 reduced [2Fe-2S]-[ferredoxin] + 2 H(+). It participates in isoprenoid biosynthesis; dimethylallyl diphosphate biosynthesis; dimethylallyl diphosphate from (2E)-4-hydroxy-3-methylbutenyl diphosphate: step 1/1. It functions in the pathway isoprenoid biosynthesis; isopentenyl diphosphate biosynthesis via DXP pathway; isopentenyl diphosphate from 1-deoxy-D-xylulose 5-phosphate: step 6/6. In terms of biological role, catalyzes the conversion of 1-hydroxy-2-methyl-2-(E)-butenyl 4-diphosphate (HMBPP) into a mixture of isopentenyl diphosphate (IPP) and dimethylallyl diphosphate (DMAPP). Acts in the terminal step of the DOXP/MEP pathway for isoprenoid precursor biosynthesis. The protein is 4-hydroxy-3-methylbut-2-enyl diphosphate reductase of Aliivibrio fischeri (strain ATCC 700601 / ES114) (Vibrio fischeri).